We begin with the raw amino-acid sequence, 202 residues long: Nucleoside triphosphate pyrophosphatase (202 aa).

Aspartate 79 acts as the Proton acceptor in catalysis.

The protein belongs to the Maf family. A divalent metal cation serves as cofactor.

The protein localises to the cytoplasm. The catalysed reaction is a ribonucleoside 5'-triphosphate + H2O = a ribonucleoside 5'-phosphate + diphosphate + H(+). It carries out the reaction a 2'-deoxyribonucleoside 5'-triphosphate + H2O = a 2'-deoxyribonucleoside 5'-phosphate + diphosphate + H(+). Functionally, nucleoside triphosphate pyrophosphatase. May have a dual role in cell division arrest and in preventing the incorporation of modified nucleotides into cellular nucleic acids. The protein is Nucleoside triphosphate pyrophosphatase of Nitrobacter hamburgensis (strain DSM 10229 / NCIMB 13809 / X14).